Consider the following 449-residue polypeptide: MLSSQTSSIFTVSRLNQTVRLLLEQEMGQVWISGEISNFTQPASGHWYFTLKDDTAQVRCAMFRNSNRRVTFRPQHGQQVLVRANITLYEPRGDYQVIAESMQPAGEGLLQQKYEQLKAKLQAEGLFDQQHKQPLPSPAHCVGVITSKTGAALHDILHVLKRRDPSLPVIIYPTAVQGDDAPGQIVRAIELANARGECDVLIVGRGGGSLEDLWSFNDERVARAIFASRIPVVSAVGHETDVTIADFVADLRAPTPSAAAEIVSRNQQELLRQIQSAQQRLGMAMDYYLANRSRRFTQIFHRLQQQHPQLRLARQQTALERLRQRMGFALEARIKQANQRQQRVSQRLSQQNPQPRIHRAQSRIQQLEYRLTENIRSRLSEQRERFGNAVTHLEAVSPLATLARGYTVSTTTDGKVLKKIKQVNAGDIMTTRLEDGWLESEVKSVTPGT.

The protein belongs to the XseA family. As to quaternary structure, heterooligomer composed of large and small subunits.

The protein localises to the cytoplasm. The enzyme catalyses Exonucleolytic cleavage in either 5'- to 3'- or 3'- to 5'-direction to yield nucleoside 5'-phosphates.. In terms of biological role, bidirectionally degrades single-stranded DNA into large acid-insoluble oligonucleotides, which are then degraded further into small acid-soluble oligonucleotides. The chain is Exodeoxyribonuclease 7 large subunit from Salmonella paratyphi A (strain ATCC 9150 / SARB42).